The chain runs to 537 residues: MAAQCVTKVALNVSCANLLDKDIGSKSDPLCVLFLNTSGQQWYEVERTERIKNCLNPQFSKTFIIDYYFEVVQKLKFGVYDIDNKTIELSDDDFLGECECTLGQIVSSKKLTRPLVMKTGRPAGKGSITISAEEIKDNRVVLFEMEARKLDNKDLFGKSDPYLEFHKQTSDGNWLMVHRTEVVKNNLNPVWRPFKISLNSLCYGDMDKTIKVECYDYDNDGSHDLIGTFQTTMTKLKEASRSSPVEFECINEKKRQKKKSYKNSGVISVKQCEITVECTFLDYIMGGCQLNFTVGVDFTGSNGDPRSPDSLHYISPNGVNEYLTALWSVGLVIQDYDADKMFPAFGFGAQIPPQWQVSHEFPMNFNPSNPYCNGIQGIVEAYRSCLPQIKLYGPTNFSPIINHVARFAAAATQQQTASQYFVLLIITDGVITDLDETRQAIVNASRLPMSIIIVGVGGADFSAMEFLDGDGGSLRSPLGEVAIRDIVQFVPFRQFQNAPKEALAQCVLAEIPQQVVGYFNTYKLLPPKNPATKQQKQ.

C2 domains follow at residues 1-115 and 124-247; these read MAAQ…TRPL and GKGS…PVEF. At S14 the chain carries Phosphoserine. The Ca(2+) site is built by D22, D28, D81, D83, D93, D154, and D160. Phosphoserine is present on S197. Ca(2+) is bound by residues D216, D218, and D224. S243 carries the post-translational modification Phosphoserine. Residues 291–513 form the VWFA domain; it reads NFTVGVDFTG…AQCVLAEIPQ (223 aa).

Belongs to the copine family. In terms of assembly, monomer. Interacts with ERBB2 (preferentially with the tyrosine phosphorylated form); this interaction occurs at the cell membrane and is increased in a growth factor heregulin-dependent manner. Interacts with SHC1; this interaction may mediate the binding of CPNE3 with ERBB2. Interacts with RACK1. Requires Ca(2+) as cofactor. Post-translationally, phosphorylated on serine and threonine residues. Expressed in breast and weakly in prostate and ovarian tissues. Expressed in neutrophils (at protein level). Widely expressed. Expressed in the brain. Expressed in neutrophil precursors from the bone marrow and peripheral blood. Expressed in primary breast tumors and ovarian endometrioid adenocarcinoma.

Its subcellular location is the nucleus. The protein resides in the cytoplasm. It localises to the cell membrane. It is found in the cell junction. The protein localises to the focal adhesion. In terms of biological role, calcium-dependent phospholipid-binding protein that plays a role in ERBB2-mediated tumor cell migration in response to growth factor heregulin stimulation. In Homo sapiens (Human), this protein is Copine-3.